Consider the following 307-residue polypeptide: Putative flagellar export/assembly protein LafU (307 aa).

Residues 32 to 54 (AWKVAFADFTLAMMALFMTLWIV) form a helical membrane-spanning segment. The disordered stretch occupies residues 87–108 (SPSHPPKPATVAAPEETEKKAR). The OmpA-like domain occupies 154–272 (LRVLIKDDQN…RIEIMVLTKS (119 aa)).

The protein belongs to the MotB family.

It is found in the cell inner membrane. In terms of biological role, part of the flagellar gene cluster Flag-2. However, the Flag-2 flagellar system could be inactive in strain 042 due to a frameshift in lfgC. This Escherichia coli O44:H18 (strain 042 / EAEC) protein is Putative flagellar export/assembly protein LafU.